A 176-amino-acid polypeptide reads, in one-letter code: NAD(P)H-quinone oxidoreductase subunit 6, chloroplastic (176 aa).

5 helical membrane passes run 10–30, 33–53, 61–81, 92–112, and 152–172; these read FLLV…ILFT, IFSA…YIIA, AQLL…VMFI, LFTL…FLLI, and FFPP…GAIA.

The protein belongs to the complex I subunit 6 family. As to quaternary structure, NDH is composed of at least 16 different subunits, 5 of which are encoded in the nucleus.

The protein localises to the plastid. Its subcellular location is the chloroplast thylakoid membrane. It catalyses the reaction a plastoquinone + NADH + (n+1) H(+)(in) = a plastoquinol + NAD(+) + n H(+)(out). The catalysed reaction is a plastoquinone + NADPH + (n+1) H(+)(in) = a plastoquinol + NADP(+) + n H(+)(out). In terms of biological role, NDH shuttles electrons from NAD(P)H:plastoquinone, via FMN and iron-sulfur (Fe-S) centers, to quinones in the photosynthetic chain and possibly in a chloroplast respiratory chain. The immediate electron acceptor for the enzyme in this species is believed to be plastoquinone. Couples the redox reaction to proton translocation, and thus conserves the redox energy in a proton gradient. This chain is NAD(P)H-quinone oxidoreductase subunit 6, chloroplastic (ndhG), found in Fagopyrum esculentum subsp. ancestrale (Wild buckwheat).